Reading from the N-terminus, the 476-residue chain is Ribulose bisphosphate carboxylase large chain (476 aa).

2 residues coordinate substrate: N116 and T166. The Proton acceptor role is filled by K168. K170 contacts substrate. 3 residues coordinate Mg(2+): K194, D196, and E197. N6-carboxylysine is present on K194. The Proton acceptor role is filled by H286. Residues R287, H319, and S371 each coordinate substrate.

It belongs to the RuBisCO large chain family. Type I subfamily. As to quaternary structure, heterohexadecamer of 8 large chains and 8 small chains. The cofactor is Mg(2+).

The enzyme catalyses 2 (2R)-3-phosphoglycerate + 2 H(+) = D-ribulose 1,5-bisphosphate + CO2 + H2O. It catalyses the reaction D-ribulose 1,5-bisphosphate + O2 = 2-phosphoglycolate + (2R)-3-phosphoglycerate + 2 H(+). In terms of biological role, ruBisCO catalyzes two reactions: the carboxylation of D-ribulose 1,5-bisphosphate, the primary event in carbon dioxide fixation, as well as the oxidative fragmentation of the pentose substrate. Both reactions occur simultaneously and in competition at the same active site. The polypeptide is Ribulose bisphosphate carboxylase large chain (Pseudonocardia dioxanivorans (strain ATCC 55486 / DSM 44775 / JCM 13855 / CB1190)).